The chain runs to 153 residues: Putative pre-16S rRNA nuclease (153 aa).

This sequence belongs to the YqgF nuclease family.

Its subcellular location is the cytoplasm. Functionally, could be a nuclease involved in processing of the 5'-end of pre-16S rRNA. The sequence is that of Putative pre-16S rRNA nuclease from Prochlorococcus marinus (strain AS9601).